We begin with the raw amino-acid sequence, 284 residues long: Non-selective voltage-gated ion channel VDAC3 (284 aa).

Residue Cys-2 is modified to N-acetylcysteine. Thr-4 is subject to Phosphothreonine. N6-acetyllysine is present on residues Lys-12, Lys-15, and Lys-20. 2 consecutive transmembrane segments (beta stranded) span residues 26–35 (MVKIDLKTKS) and 39–48 (VMEFSTSGHA). Residue Lys-54 forms a Glycyl lysine isopeptide (Lys-Gly) (interchain with G-Cter in ubiquitin) linkage. 3 consecutive transmembrane segments (beta stranded) span residues 55–65 (ASGNLETKYKV), 70–77 (LTFTQKWN), and 81–90 (TLGTEISWEN). Lys-91 carries the post-translational modification N6-acetyllysine. The chain crosses the membrane as a beta stranded span at residues 96 to 105 (LKLTLDTIFV). Glycyl lysine isopeptide (Lys-Gly) (interchain with G-Cter in ubiquitin) cross-links involve residues Lys-110 and Lys-111. The next 10 beta stranded transmembrane spans lie at 112 to 121 (SGKLKASYKR), 124 to 131 (FSVGSNVD), 138 to 146 (TIYGWAVLA), 151 to 159 (LAGYQMSFD), 164 to 176 (KLSQ…GYKA), 179 to 186 (FQLHTHVN), 190 to 199 (EFGGSIYQKV), 203 to 212 (IETSINLAWT), 219 to 228 (RFGIAAKYML), and 232 to 239 (TSLSAKVN). Ser-242 is subject to Phosphoserine. Residues 243 to 245 (LIG) and 261 to 265 (SALID) contribute to the NAD(+) site. The next 2 membrane-spanning stretches (beta stranded) occupy residues 243–252 (LIGLGYTQTL) and 255–264 (GVKLTLSALI). Residue Lys-267 is modified to N6-acetyllysine; alternate. A Glycyl lysine isopeptide (Lys-Gly) (interchain with G-Cter in ubiquitin); alternate cross-link involves residue Lys-267. Residues 274-283 (HKVGLGFELE) traverse the membrane as a beta stranded segment.

This sequence belongs to the eukaryotic mitochondrial porin family. As to quaternary structure, interacts with ARMC12 in a TBC1D21-dependent manner. Interacts with MISFA. Ubiquitinated by PRKN during mitophagy, leading to its degradation and enhancement of mitophagy. Deubiquitinated by USP30.

Its subcellular location is the mitochondrion outer membrane. It localises to the membrane. It catalyses the reaction chloride(in) = chloride(out). It carries out the reaction K(+)(in) = K(+)(out). Functionally, non-selective voltage-gated ion channel that mediates the transport of anions and cations through the mitochondrion outer membrane and plasma membrane. Forms a high-conducting channel with a stable open state and a voltage-induced closure with a mild preference for anions over cations. Involved in male fertility and sperm mitochondrial sheath formation. The protein is Non-selective voltage-gated ion channel VDAC3 of Pongo abelii (Sumatran orangutan).